A 121-amino-acid polypeptide reads, in one-letter code: Small ribosomal subunit protein uS10 (121 aa).

At serine 2 the chain carries N-acetylserine. Glycyl lysine isopeptide (Lys-Gly) (interchain with G-Cter in ubiquitin) cross-links involve residues lysine 6, lysine 8, lysine 21, lysine 32, and lysine 101.

It belongs to the universal ribosomal protein uS10 family. In terms of assembly, component of the small ribosomal subunit (SSU). Mature yeast ribosomes consist of a small (40S) and a large (60S) subunit. The 40S small subunit contains 1 molecule of ribosomal RNA (18S rRNA) and 33 different proteins (encoded by 57 genes). The large 60S subunit contains 3 rRNA molecules (25S, 5.8S and 5S rRNA) and 46 different proteins (encoded by 81 genes). Post-translationally, ubiquitinated at Lys-6 and Lys-8 by HEL2, to activate the ribosome quality control (RQC) pathway in response to stalled ribosomes. In terms of processing, N-terminally acetylated by acetyltransferase NatA. Also partially acetylated by NatC.

The protein localises to the cytoplasm. In terms of biological role, component of the ribosome, a large ribonucleoprotein complex responsible for the synthesis of proteins in the cell. The small ribosomal subunit (SSU) binds messenger RNAs (mRNAs) and translates the encoded message by selecting cognate aminoacyl-transfer RNA (tRNA) molecules. The large subunit (LSU) contains the ribosomal catalytic site termed the peptidyl transferase center (PTC), which catalyzes the formation of peptide bonds, thereby polymerizing the amino acids delivered by tRNAs into a polypeptide chain. The nascent polypeptides leave the ribosome through a tunnel in the LSU and interact with protein factors that function in enzymatic processing, targeting, and the membrane insertion of nascent chains at the exit of the ribosomal tunnel. In Saccharomyces cerevisiae (strain ATCC 204508 / S288c) (Baker's yeast), this protein is Small ribosomal subunit protein uS10.